An 869-amino-acid chain; its full sequence is DNA mismatch repair protein MutS (869 aa).

624 to 631 (GPNMGGKS) provides a ligand contact to ATP.

The protein belongs to the DNA mismatch repair MutS family.

Its function is as follows. This protein is involved in the repair of mismatches in DNA. It is possible that it carries out the mismatch recognition step. This protein has a weak ATPase activity. In Solibacter usitatus (strain Ellin6076), this protein is DNA mismatch repair protein MutS.